The primary structure comprises 300 residues: Ribonuclease HIII (300 aa).

The RNase H type-2 domain occupies 83–300 (IPIIGSDEVG…THKAQALLTK (218 aa)). A divalent metal cation contacts are provided by D89, E90, and D194.

The protein belongs to the RNase HII family. RnhC subfamily. It depends on Mn(2+) as a cofactor. The cofactor is Mg(2+).

It is found in the cytoplasm. It catalyses the reaction Endonucleolytic cleavage to 5'-phosphomonoester.. Endonuclease that specifically degrades the RNA of RNA-DNA hybrids. In Streptococcus pyogenes serotype M4 (strain MGAS10750), this protein is Ribonuclease HIII.